A 135-amino-acid chain; its full sequence is Succinate dehydrogenase assembly factor 3, mitochondrial (135 aa).

Residues 73 to 101 form a disordered region; the sequence is KENSNNNDNYNNNNNDNNNDNNNFINIGQ. The span at 75–95 shows a compositional bias: low complexity; sequence NSNNNDNYNNNNNDNNNDNNN.

The protein belongs to the complex I LYR family. SDHAF3 subfamily. As to quaternary structure, interacts with the iron-sulfur protein subunit within the SDH catalytic dimer.

The protein localises to the mitochondrion matrix. Plays an essential role in the assembly of succinate dehydrogenase (SDH), an enzyme complex (also referred to as respiratory complex II) that is a component of both the tricarboxylic acid (TCA) cycle and the mitochondrial electron transport chain, and which couples the oxidation of succinate to fumarate with the reduction of ubiquinone (coenzyme Q) to ubiquinol. Promotes maturation of the iron-sulfur protein subunit of the SDH catalytic dimer, protecting it from the deleterious effects of oxidants. May act together with SDHAF1. This Dictyostelium discoideum (Social amoeba) protein is Succinate dehydrogenase assembly factor 3, mitochondrial (acn9).